A 92-amino-acid chain; its full sequence is Small ribosomal subunit protein uS19 (92 aa).

Belongs to the universal ribosomal protein uS19 family.

In terms of biological role, protein S19 forms a complex with S13 that binds strongly to the 16S ribosomal RNA. In Vibrio vulnificus (strain CMCP6), this protein is Small ribosomal subunit protein uS19.